A 576-amino-acid polypeptide reads, in one-letter code: Eukaryotic translation initiation factor 3 subunit D (576 aa).

The segment at Asp103 to Arg176 is disordered. Residues Gly110 to Gly122 are compositionally biased toward gly residues. A compositionally biased stretch (basic and acidic residues) spans Gly165–Arg176. Residues Thr304–Pro318 form an RNA gate region.

It belongs to the eIF-3 subunit D family. In terms of assembly, component of the eukaryotic translation initiation factor 3 (eIF-3) complex.

Its subcellular location is the cytoplasm. In terms of biological role, mRNA cap-binding component of the eukaryotic translation initiation factor 3 (eIF-3) complex, which is involved in protein synthesis of a specialized repertoire of mRNAs and, together with other initiation factors, stimulates binding of mRNA and methionyl-tRNAi to the 40S ribosome. The eIF-3 complex specifically targets and initiates translation of a subset of mRNAs involved in cell proliferation. In the eIF-3 complex, eif3d specifically recognizes and binds the 7-methylguanosine cap of a subset of mRNAs. This Botryotinia fuckeliana (strain B05.10) (Noble rot fungus) protein is Eukaryotic translation initiation factor 3 subunit D.